Here is a 364-residue protein sequence, read N- to C-terminus: Probable mannose-1-phosphate guanylyltransferase 2 (364 aa).

The GDP-alpha-D-mannose site is built by L6 and V7. Residues G9, G11, T12, R13, and K23 each coordinate diphosphate. Residues G88, N112, D114, G149, and N176 each contribute to the GDP-alpha-D-mannose site.

This sequence belongs to the transferase hexapeptide repeat family.

The enzyme catalyses alpha-D-mannose 1-phosphate + GTP + H(+) = GDP-alpha-D-mannose + diphosphate. Its pathway is nucleotide-sugar biosynthesis; GDP-alpha-D-mannose biosynthesis; GDP-alpha-D-mannose from alpha-D-mannose 1-phosphate (GTP route): step 1/1. Functionally, catalyzes a reaction of the Smirnoff-Wheeler pathway, the major route to ascorbate biosynthesis in plants. The chain is Probable mannose-1-phosphate guanylyltransferase 2 from Arabidopsis thaliana (Mouse-ear cress).